The following is a 481-amino-acid chain: Proline--tRNA ligase (481 aa).

This sequence belongs to the class-II aminoacyl-tRNA synthetase family. ProS type 3 subfamily. Homodimer.

It is found in the cytoplasm. The catalysed reaction is tRNA(Pro) + L-proline + ATP = L-prolyl-tRNA(Pro) + AMP + diphosphate. In terms of biological role, catalyzes the attachment of proline to tRNA(Pro) in a two-step reaction: proline is first activated by ATP to form Pro-AMP and then transferred to the acceptor end of tRNA(Pro). The protein is Proline--tRNA ligase of Chlorobium phaeobacteroides (strain DSM 266 / SMG 266 / 2430).